A 144-amino-acid chain; its full sequence is MLQNTSRFLARAGATVGVAAGLAFSLPADRDGAPGVTVTPATGLSNGQTVTVSATGLTPGTVYHVGQCAVVEPGVIGCDATTSTDVTADAAGKITAQLKVHSSFQAVVGANGTPWGTVNCKVVSCSAGLGSDSGEGAAQAITFA.

A signal peptide spans 1 to 32 (MLQNTSRFLARAGATVGVAAGLAFSLPADRDG). Disulfide bonds link C68/C78 and C120/C125.

This sequence belongs to the neocarzinostatin family.

Binds non-covalently to a chromophore which is the cytotoxic and mutagenic component of the antibiotic. The chromophore binds to DNA as a weak intercalator and causes single- and double-strand breaks. This Streptomyces macromomyceticus protein is Macromomycin.